Here is a 673-residue protein sequence, read N- to C-terminus: Auxin response factor 9 (673 aa).

Positions 126–228 (FCKTLTASDT…ELRVGVRRLM (103 aa)) form a DNA-binding region, TF-B3. 2 disordered regions span residues 356-386 (ELEP…PSVV) and 514-545 (DSDQ…QSRQ). Residues 516–545 (DQISQPSNGNKSDAPGTSSERSPLESQSRQ) are compositionally biased toward polar residues. The 93-residue stretch at 547 to 639 (RSCTKVIMQG…EEAKLLAPKS (93 aa)) folds into the PB1 domain.

The protein belongs to the ARF family. In terms of assembly, homodimers and heterodimers. As to expression, expressed in roots, culms, leaves and young panicles.

Its subcellular location is the nucleus. In terms of biological role, auxin response factors (ARFs) are transcriptional factors that bind specifically to the DNA sequence 5'-TGTCTC-3' found in the auxin-responsive promoter elements (AuxREs). The chain is Auxin response factor 9 (ARF9) from Oryza sativa subsp. japonica (Rice).